The primary structure comprises 433 residues: 3-phosphoshikimate 1-carboxyvinyltransferase (433 aa).

3-phosphoshikimate contacts are provided by Lys23, Ser24, and Arg28. Lys23 contacts phosphoenolpyruvate. Residues Gly95 and Arg123 each contribute to the phosphoenolpyruvate site. Ser170, Ser171, Gln172, Ser198, Asp317, and Lys344 together coordinate 3-phosphoshikimate. A phosphoenolpyruvate-binding site is contributed by Gln172. The Proton acceptor role is filled by Asp317. Residues Arg348, Arg391, and Lys416 each contribute to the phosphoenolpyruvate site.

This sequence belongs to the EPSP synthase family. In terms of assembly, monomer.

The protein resides in the cytoplasm. The catalysed reaction is 3-phosphoshikimate + phosphoenolpyruvate = 5-O-(1-carboxyvinyl)-3-phosphoshikimate + phosphate. It functions in the pathway metabolic intermediate biosynthesis; chorismate biosynthesis; chorismate from D-erythrose 4-phosphate and phosphoenolpyruvate: step 6/7. Its function is as follows. Catalyzes the transfer of the enolpyruvyl moiety of phosphoenolpyruvate (PEP) to the 5-hydroxyl of shikimate-3-phosphate (S3P) to produce enolpyruvyl shikimate-3-phosphate and inorganic phosphate. The sequence is that of 3-phosphoshikimate 1-carboxyvinyltransferase from Neisseria meningitidis serogroup C / serotype 2a (strain ATCC 700532 / DSM 15464 / FAM18).